Here is a 483-residue protein sequence, read N- to C-terminus: UDP-N-acetylmuramoyl-L-alanyl-D-glutamate--2,6-diaminopimelate ligase (483 aa).

Residue Ser-30 coordinates UDP-N-acetyl-alpha-D-muramoyl-L-alanyl-D-glutamate. 109–115 (GTNGKTT) provides a ligand contact to ATP. Residues 151 to 152 (TT), Ser-178, and Arg-186 contribute to the UDP-N-acetyl-alpha-D-muramoyl-L-alanyl-D-glutamate site. Lys-218 carries the post-translational modification N6-carboxylysine. Meso-2,6-diaminopimelate contacts are provided by residues Arg-380, 403-406 (DNPR), Gly-453, and Glu-457. Positions 403–406 (DNPR) match the Meso-diaminopimelate recognition motif motif.

This sequence belongs to the MurCDEF family. MurE subfamily. Requires Mg(2+) as cofactor. In terms of processing, carboxylation is probably crucial for Mg(2+) binding and, consequently, for the gamma-phosphate positioning of ATP.

Its subcellular location is the cytoplasm. It carries out the reaction UDP-N-acetyl-alpha-D-muramoyl-L-alanyl-D-glutamate + meso-2,6-diaminopimelate + ATP = UDP-N-acetyl-alpha-D-muramoyl-L-alanyl-gamma-D-glutamyl-meso-2,6-diaminopimelate + ADP + phosphate + H(+). It functions in the pathway cell wall biogenesis; peptidoglycan biosynthesis. Its function is as follows. Catalyzes the addition of meso-diaminopimelic acid to the nucleotide precursor UDP-N-acetylmuramoyl-L-alanyl-D-glutamate (UMAG) in the biosynthesis of bacterial cell-wall peptidoglycan. The protein is UDP-N-acetylmuramoyl-L-alanyl-D-glutamate--2,6-diaminopimelate ligase of Chlamydia pneumoniae (Chlamydophila pneumoniae).